The primary structure comprises 450 residues: SAGA complex/transcription factor TFIID complex subunit Taf12 (450 aa).

Polar residues-rich tracts occupy residues 1-10, 19-29, and 190-212; these read MNGQHSSPGT, PVNQAQFSQQR, and QNRQ…NAST. Disordered regions lie at residues 1–29 and 190–281; these read MNGQ…SQQR and QNRQ…VEKS. Positions 217–236 are enriched in low complexity; that stretch reads STASTPQLQQTQAQANAPQQ. Polar residues-rich tracts occupy residues 237 to 246 and 255 to 281; these read RINPETSSVP and ANVS…VEKS. Serine 297 is modified (phosphoserine). The region spanning 338–413 is the Histone-fold domain; sequence NGNRLLSKRK…HLERNWNIRL (76 aa). The segment at 426-450 is disordered; that stretch reads RKTGPTPSYQQKQNAIGTAKSLNKD. A compositionally biased stretch (polar residues) spans 430–441; sequence PTPSYQQKQNAI.

This sequence belongs to the TAF12 family. In terms of assembly, component of the 1.8 MDa SAGA (Spt-Ada-Gcn5 acetyltransferase) complex, which is composed of 19 subunits tra1, spt7, taf5, ngg1/ada3, sgf73, spt20, spt8, taf12, taf6, hfi1/ada1, ubp8, gcn5, ada2, spt3, sgf29, taf10, taf9, sgf11 and sus1. The SAGA complex is composed of 4 modules, namely the HAT (histone acetyltransferase) module (gcn5, ada2, ngg1/ada3 and sgf29), the DUB (deubiquitinating) module (ubp8, sgf11, sgf73 and sus1), the core or TAF (TBP-associated factor) module (taf5, taf6, taf9, taf10 and taf12), and the Tra1 or SPT (Suppressor of Ty) module (tra1, hfi1/ada1, spt3, spt7, spt8 and spt20). The Tra1/SPT module binds activators, the core module recruits TBP (TATA-binding protein), the HAT module contains the histone H3 acetyltransferase gcn5, and the DUB module comprises the histone H2B deubiquitinase ubp8. Component of the 1.2 MDa TFIID complex, which is composed of TATA-binding protein (TBP) and the 14 TBP-associated factors (TAFs). It comprises 1 copy of each taf1, taf2, taf3, taf7, taf8, taf11, taf13, 2 copies of each taf4, taf5, taf6, taf9, taf10, taf12, and 3 copies of taf14. In TFIID, taf12 heterodimerizes with taf4, forming ultimately an octamer consisting of a taf6-taf9 heterotetramer core flanked by taf4-taf12 dimers on either side, similar to the histone H2A-H2B-H3-H4 octamer.

Its subcellular location is the nucleus. Functionally, functions as a component of both the DNA-binding general transcription initiation factor complex TFIID and the transcription coactivator SAGA complex. Binding of TFIID to a promoter (with or without TATA element) is the initial step in pre-initiation complex (PIC) formation. TFIID plays a key role in the regulation of gene expression by RNA polymerase II through different activities such as transcription activator interaction, core promoter recognition and selectivity, TFIIA and TFIIB interaction, chromatin modification (histone acetylation by TAF1), facilitation of DNA opening and initiation of transcription. SAGA acts as a general cofactor required for essentially all RNA polymerase II transcription. At the promoters, SAGA is required for transcription pre-initiation complex (PIC) recruitment. It influences RNA polymerase II transcriptional activity through different activities such as TBP interaction (via core/TAF module) and promoter selectivity, interaction with transcription activators (via Tra1/SPT module), and chromatin modification through histone acetylation (via HAT module) and deubiquitination (via DUB module). SAGA preferentially acetylates histones H3 (to form H3K9ac, H3K14ac, H3K18ac and H3K23ac) and H2B and deubiquitinates histone H2B. SAGA interacts with DNA via upstream activating sequences (UASs). This chain is SAGA complex/transcription factor TFIID complex subunit Taf12, found in Schizosaccharomyces pombe (strain 972 / ATCC 24843) (Fission yeast).